A 157-amino-acid polypeptide reads, in one-letter code: SsrA-binding protein (157 aa).

It belongs to the SmpB family.

It is found in the cytoplasm. Required for rescue of stalled ribosomes mediated by trans-translation. Binds to transfer-messenger RNA (tmRNA), required for stable association of tmRNA with ribosomes. tmRNA and SmpB together mimic tRNA shape, replacing the anticodon stem-loop with SmpB. tmRNA is encoded by the ssrA gene; the 2 termini fold to resemble tRNA(Ala) and it encodes a 'tag peptide', a short internal open reading frame. During trans-translation Ala-aminoacylated tmRNA acts like a tRNA, entering the A-site of stalled ribosomes, displacing the stalled mRNA. The ribosome then switches to translate the ORF on the tmRNA; the nascent peptide is terminated with the 'tag peptide' encoded by the tmRNA and targeted for degradation. The ribosome is freed to recommence translation, which seems to be the essential function of trans-translation. The chain is SsrA-binding protein from Bacillus licheniformis (strain ATCC 14580 / DSM 13 / JCM 2505 / CCUG 7422 / NBRC 12200 / NCIMB 9375 / NCTC 10341 / NRRL NRS-1264 / Gibson 46).